Here is a 507-residue protein sequence, read N- to C-terminus: L-amino-acid oxidase (507 aa).

The signal sequence occupies residues 1 to 19; the sequence is MNVLFIFSLLFLAALESCA. A disulfide bond links C29 and C192. Residues 62 to 63, 82 to 83, R90, and 106 to 109 each bind FAD; these read MA, EA, and GPMR. R109 lines the substrate pocket. N-linked (GlcNAc...) asparagine glycosylation is found at N191 and N213. V280 contributes to the FAD binding site. A disulfide bond links C348 and C429. Residue N378 is glycosylated (N-linked (GlcNAc...) asparagine). Substrate is bound at residue Y389. FAD contacts are provided by residues E473 and 480–485; that span reads GWIDST.

The protein belongs to the flavin monoamine oxidase family. FIG1 subfamily. In terms of assembly, homodimer; non-covalently linked. FAD is required as a cofactor. As to expression, expressed by the venom gland.

It is found in the secreted. The enzyme catalyses an L-alpha-amino acid + O2 + H2O = a 2-oxocarboxylate + H2O2 + NH4(+). It carries out the reaction L-leucine + O2 + H2O = 4-methyl-2-oxopentanoate + H2O2 + NH4(+). Catalyzes an oxidative deamination of predominantly hydrophobic and aromatic L-amino acids, thus producing hydrogen peroxide that may contribute to the diverse toxic effects of this enzyme. Shows activity on L-Leu. Exhibits diverse biological activities, such as hemorrhage, hemolysis, edema, apoptosis of vascular endothelial cells or tumor cell lines, antibacterial and antiparasitic activities. This protein induces platelet aggregation by both hydrogen peroxide production and binding to platelet membrane proteins (that would enhance the sensitivity of platelets to hydrogen peroxide). Effects of snake L-amino oxidases on platelets are controversial, since they either induce aggregation or inhibit agonist-induced aggregation. These different effects are probably due to different experimental conditions. The protein is L-amino-acid oxidase of Naja atra (Chinese cobra).